Consider the following 401-residue polypeptide: O-methyltransferase SAT18 (401 aa).

Asp249 contacts S-adenosyl-L-methionine. His300 acts as the Proton acceptor in catalysis.

Belongs to the class I-like SAM-binding methyltransferase superfamily. Cation-independent O-methyltransferase family.

It functions in the pathway mycotoxin biosynthesis. Functionally, O-methyltransferase; part of the satratoxin SC3 cluster involved in the biosynthesis of satratoxins, trichothecene mycotoxins that are associated with human food poisonings. Satratoxins are suggested to be made by products of multiple gene clusters (SC1, SC2 and SC3) that encode 21 proteins in all, including polyketide synthases, acetyltransferases, and other enzymes expected to modify the trichothecene skeleton. SC1 encodes 10 proteins, SAT1 to SAT10. The largest are SAT8, which encodes a putative polyketide synthase (PKS) with a conventional non-reducing architecture, and SAT10, a putative protein containing four ankyrin repeats and thus may be involved in protein scaffolding. The putative short-chain reductase SAT3 may assist the PKS in some capacity. SAT6 contains a secretory lipase domain and acts probably as a trichothecene esterase. SAT5 encodes a putative acetyltransferase, and so, with SAT6, may affect endogenous protection from toxicity. The probable transcription factor SAT9 may regulate the expression of the SC1 cluster. SC2 encodes proteins SAT11 to SAT16, the largest of which encodes the putative reducing PKS SAT13. SAT11 is a cytochrome P450 monooxygenase, while SAT14 and SAT16 are probable acetyltransferases. The SC2 cluster may be regulated by the transcription factor SAT15. SC3 is a small cluster that encodes 5 proteins, SAT17 to SAT21. SAT21 is a putative MFS-type transporter which may have a role in exporting secondary metabolites. The four other proteins putatively encoded in SC3 include the taurine hydroxylase-like protein SAT17, the O-methyltransferase SAT18, the acetyltransferase SAT19, and the Cys6-type zinc finger SAT20, the latter being probably involved in regulation of SC3 expression. The sequence is that of O-methyltransferase SAT18 from Stachybotrys chartarum (strain CBS 109288 / IBT 7711) (Toxic black mold).